The chain runs to 173 residues: Large ribosomal subunit protein uL10 (173 aa).

This sequence belongs to the universal ribosomal protein uL10 family. Part of the ribosomal stalk of the 50S ribosomal subunit. The N-terminus interacts with L11 and the large rRNA to form the base of the stalk. The C-terminus forms an elongated spine to which L12 dimers bind in a sequential fashion forming a multimeric L10(L12)X complex.

Functionally, forms part of the ribosomal stalk, playing a central role in the interaction of the ribosome with GTP-bound translation factors. The protein is Large ribosomal subunit protein uL10 of Chloroherpeton thalassium (strain ATCC 35110 / GB-78).